Consider the following 157-residue polypeptide: Regulator of Ty1 transposition protein 102 (157 aa).

Residue serine 77 is modified to Phosphoserine. The tract at residues 95–157 is disordered; sequence SLMTSHTKGD…TKESKDVKMN (63 aa). The span at 96-116 shows a compositional bias: polar residues; sequence LMTSHTKGDTSKATGAPSANQ. Serine 122 bears the Phosphoserine mark. A compositionally biased stretch (basic and acidic residues) spans 147 to 157; it reads NTKESKDVKMN.

In terms of assembly, interacts with STH1 and SWI3. Component of the two forms of the RSC complex composed of at least either RSC1 or RSC2, and ARP7, ARP9, LDB7, NPL6, RSC3, RSC30, RSC4, RSC58, RSC6, RSC8, RSC9, SFH1, STH1, HTL1 and probably RTT102. The complexes interact with histone and histone variant components of centromeric chromatin. Probable additional component of the SWI/SNF global transcription activator complex. The 1.14 MDa SWI/SNF complex is composed of 11 different subunits: one copy each of SWI1, SNF2/SWI2, SNF5, SNF12/SWP73, ARP7/SWP61, ARP9/SWP59; two copies each of SWI3, SNF6, SNF11, SWP82; and three copies of TAF14/SWP29.

The protein localises to the nucleus. In terms of biological role, probable component of the chromatin structure-remodeling complex (RSC) which is involved in transcription regulation and nucleosome positioning. RSC is responsible for the transfer of a histone octamer from a nucleosome core particle to naked DNA. The reaction requires ATP and involves an activated RSC-nucleosome intermediate. Remodeling reaction also involves DNA translocation, DNA twist and conformational change. As a reconfigurer of centromeric and flanking nucleosomes, RSC complex is required both for proper kinetochore function in chromosome segregation and, via a PKC1-dependent signaling pathway, for organization of the cellular cytoskeleton. Probable component of the SWI/SNF complex, an ATP-dependent chromatin-remodeling complex, is required for the positive and negative regulation of gene expression of a large number of genes. It changes chromatin structure by altering DNA-histone contacts within a nucleosome, leading eventually to a change in nucleosome position, thus facilitating or repressing binding of gene-specific transcription factors. The chain is Regulator of Ty1 transposition protein 102 (RTT102) from Saccharomyces cerevisiae (strain ATCC 204508 / S288c) (Baker's yeast).